The primary structure comprises 287 residues: Large ribosomal subunit protein uL2 (287 aa).

2 disordered regions span residues 25–57 (TKTEPEKSLTTSKHRAKGRNNTGRITSRRRGGG) and 203–287 (LSAG…GRES). 2 stretches are compositionally biased toward basic residues: residues 209–220 (GRNRWKGRRPKV) and 259–287 (TRNRKKLSSKFIVRRRRKSSKRGRGGRES).

This sequence belongs to the universal ribosomal protein uL2 family. As to quaternary structure, part of the 50S ribosomal subunit. Forms a bridge to the 30S subunit in the 70S ribosome.

Functionally, one of the primary rRNA binding proteins. Required for association of the 30S and 50S subunits to form the 70S ribosome, for tRNA binding and peptide bond formation. It has been suggested to have peptidyltransferase activity; this is somewhat controversial. Makes several contacts with the 16S rRNA in the 70S ribosome. This Nostoc punctiforme (strain ATCC 29133 / PCC 73102) protein is Large ribosomal subunit protein uL2.